The sequence spans 217 residues: Small ribosomal subunit protein uS3 (217 aa).

Positions 40–110 constitute a KH type-2 domain; it reads IRDLINKWFN…EVYINIHEVR (71 aa).

It belongs to the universal ribosomal protein uS3 family. In terms of assembly, part of the 30S ribosomal subunit. Forms a tight complex with proteins S10 and S14.

In terms of biological role, binds the lower part of the 30S subunit head. Binds mRNA in the 70S ribosome, positioning it for translation. The protein is Small ribosomal subunit protein uS3 of Rickettsia typhi (strain ATCC VR-144 / Wilmington).